We begin with the raw amino-acid sequence, 426 residues long: MAGIKDFPKFGALAGLKILDSGSNIAGPLGGGLLAECGATVIHFEGPKKPDNQRGWYGYPQNHRNQLSMVADIKSEEGRKIFLDLIKWADIWVESSKGGQYDRLGLSDEVIWEVNPKIAIVHVSGYGQTGDPSYVTRASYDAVGQAFSGYMSLNGTTEALKINPYLSDFVCGLTTCWAMLACYVSTILTGKGESVDVAQYEALARIMDGRMIQYATDGVKMPRTGNKDAQAALFSFYTCKDGRTIFIGMTGAEVCKRGFPIIGLPVPGTGDPDFPEGFTGWMIYTPVGQRMEKAMEKYVSEHTMEEVEAEMQAHQIPCQRVYELEDCLNDPHWKARGTITEWDDPMMGHITGLGLINKFKRNPSEIWRGAPLFGMDNRDILKDLGYDDAKIDELYEQGIVNEFDLDTTIKRYRLDEVIPHMRKKEE.

Residue D168 is the Nucleophile of the active site.

The protein belongs to the CoA-transferase III family.

It catalyses the reaction lithocholoyl-CoA + cholate = choloyl-CoA + lithocholate. The catalysed reaction is deoxycholoyl-CoA + cholate = choloyl-CoA + deoxycholate. It carries out the reaction allodeoxycholoyl-CoA + cholate = allodeoxycholate + choloyl-CoA. The enzyme catalyses allocholate + deoxycholoyl-CoA = allocholoyl-CoA + deoxycholate. It catalyses the reaction allocholate + lithocholoyl-CoA = allocholoyl-CoA + lithocholate. The catalysed reaction is allocholate + allodeoxycholoyl-CoA = allocholoyl-CoA + allodeoxycholate. It carries out the reaction lithocholoyl-CoA + chenodeoxycholate = chenodeoxycholoyl-CoA + lithocholate. The enzyme catalyses ursodeoxycholate + deoxycholoyl-CoA = ursodeoxycholoyl-CoA + deoxycholate. It catalyses the reaction ursodeoxycholate + lithocholoyl-CoA = ursodeoxycholoyl-CoA + lithocholate. The catalysed reaction is allodeoxycholoyl-CoA + ursodeoxycholate = ursodeoxycholoyl-CoA + allodeoxycholate. It carries out the reaction beta-muricholate + lithocholoyl-CoA = beta-muricholoyl-CoA + lithocholate. The enzyme catalyses beta-muricholate + deoxycholoyl-CoA = beta-muricholoyl-CoA + deoxycholate. It catalyses the reaction beta-muricholate + allodeoxycholoyl-CoA = beta-muricholoyl-CoA + allodeoxycholate. The catalysed reaction is choloyl-CoA + H2O = cholate + CoA + H(+). It carries out the reaction chenodeoxycholoyl-CoA + H2O = chenodeoxycholate + CoA + H(+). It functions in the pathway lipid metabolism; bile acid biosynthesis. Functions in the bile acid 7alpha-dehydroxylation pathway, which forms secondary bile acids via the 7alpha-dehydroxylation of primary bile acids, and is carried out by intestinal anaerobic bacteria. Acts as a bile acid CoA transferase with broad bile acid substrate specificity. Catalyzes the transfer of the CoA moiety of secondary bile acid-CoA compounds to primary bile acids. Can use lithocholoyl-CoA, deoxycholoyl-CoA and allodeoxycholoyl-CoA as bile acid CoA donors and cholate, allocholate, chenodeoxycholate, ursodeoxycholate, and beta-muricholate as bile acid CoA acceptors. Also displays CoA hydrolase activity, being able to catalyze the hydrolysis of choloyl-CoA, 3-dehydrocholoyl-CoA, and chenodeoxycholoyl-CoA, releasing CoA and the corresponding free bile acid. However, this latter activity may not represent the actual activity of this enzyme, since using a transferase rather than hydrolase, the bacteria conserve the thioester bond energy, saving ATP molecules. Shows no hydrolytic activity with acetyl-CoA, isovaleryl-CoA, palmitoyl-CoA, or phenylacetyl-CoA as substrates. The chain is Bile acid CoA-transferase BaiF from Clostridium scindens (strain JCM 10418 / VPI 12708).